The primary structure comprises 113 residues: Photosystem II reaction center Psb28 protein (113 aa).

This sequence belongs to the Psb28 family. In terms of assembly, part of the photosystem II complex.

The protein localises to the cellular thylakoid membrane. This chain is Photosystem II reaction center Psb28 protein, found in Prochlorococcus marinus (strain NATL1A).